The following is a 351-amino-acid chain: Probable cobalt-factor III C(17)-methyltransferase (351 aa).

This sequence belongs to the precorrin methyltransferase family.

The catalysed reaction is Co(II)-factor III + S-adenosyl-L-methionine + H(+) = Co(II)-factor IV + S-adenosyl-L-homocysteine. Its pathway is cofactor biosynthesis; adenosylcobalamin biosynthesis; cob(II)yrinate a,c-diamide from sirohydrochlorin (anaerobic route): step 3/10. Its function is as follows. Methyltransferase that likely catalyzes the ring contraction and methylation of C-17 in cobalt-factor III to form cobalt-factor IV. May also convert cobalt-precorrin-3 to cobalt-precorrin-4. The polypeptide is Probable cobalt-factor III C(17)-methyltransferase (cbiH) (Methanothermobacter thermautotrophicus (strain ATCC 29096 / DSM 1053 / JCM 10044 / NBRC 100330 / Delta H) (Methanobacterium thermoautotrophicum)).